The chain runs to 1029 residues: Endosome/lysosome-associated apoptosis and autophagy regulator family member 2 (1029 aa).

The first 47 residues, 1–47 (MLFRARGPVRGRGWGRPAEAPRRGRSPPWSPAWICCWALAGCQAAWA), serve as a signal peptide directing secretion. At 48-929 (GDLPSSSSRP…TCETVDFWLK (882 aa)) the chain is on the extracellular side. The N-linked (GlcNAc...) asparagine glycan is linked to Asn169. Disulfide bonds link Cys293/Cys310, Cys323/Cys346, and Cys326/Cys358. Residues Asn405 and Asn691 are each glycosylated (N-linked (GlcNAc...) asparagine). The region spanning 672 to 877 (SDCFFYHEKE…LWESAEACPL (206 aa)) is the MRH domain. Cystine bridges form between Cys674–Cys720, Cys730–Cys758, Cys827–Cys863, and Cys839–Cys875. A helical transmembrane segment spans residues 930-950 (VGAGVGAFTAVLLVALTCYFW). Residues 951–1029 (KKNQKLEYKY…QLKTSRSPNI (79 aa)) are Cytoplasmic-facing. Ser1018 carries the phosphoserine modification.

The protein belongs to the ELAPOR family.

Its subcellular location is the cell membrane. In terms of biological role, functions as a regulator of the BMP signaling pathway and may be involved in epidermal differentiation. This is Endosome/lysosome-associated apoptosis and autophagy regulator family member 2 from Homo sapiens (Human).